Reading from the N-terminus, the 443-residue chain is D-alanyl-D-alanine carboxypeptidase DacA (443 aa).

Positions 1–31 (MNIKKCKQLLMSLVVLTLAVTCLAPMSKAKA) are cleaved as a signal peptide. S67 serves as the catalytic Acyl-ester intermediate. K70 (proton acceptor) is an active-site residue. The active site involves S131. Position 258 (K258) interacts with substrate.

This sequence belongs to the peptidase S11 family.

It is found in the secreted. Its subcellular location is the cell wall. The protein resides in the cell membrane. The protein localises to the membrane raft. It catalyses the reaction Preferential cleavage: (Ac)2-L-Lys-D-Ala-|-D-Ala. Also transpeptidation of peptidyl-alanyl moieties that are N-acyl substituents of D-alanine.. It participates in cell wall biogenesis; peptidoglycan biosynthesis. Removes C-terminal D-alanyl residues from sugar-peptide cell wall precursors. This chain is D-alanyl-D-alanine carboxypeptidase DacA (dacA), found in Bacillus subtilis (strain 168).